The chain runs to 443 residues: GTPase Der (443 aa).

EngA-type G domains are found at residues 3–167 (PVIA…PEEK) and 176–349 (IKIA…QSIQ). Residues 9-16 (GRPNVGKS), 56-60 (DTGGL), 119-122 (NKAD), 182-189 (GRPNVGKS), 229-233 (DTAGI), and 294-297 (NKWD) contribute to the GTP site. The KH-like domain maps to 350–434 (QELTTGQLTR…PVHIKLKTDP (85 aa)).

This sequence belongs to the TRAFAC class TrmE-Era-EngA-EngB-Septin-like GTPase superfamily. EngA (Der) GTPase family. In terms of assembly, associates with the 50S ribosomal subunit.

GTPase that plays an essential role in the late steps of ribosome biogenesis. The protein is GTPase Der of Coxiella burnetii (strain CbuG_Q212) (Coxiella burnetii (strain Q212)).